We begin with the raw amino-acid sequence, 368 residues long: MTVTGIIAEFNPFHNGHKYLLETAEGLKIIAMSGNFMQRGEPALIDKWIRSEMALKNGADIVVELPFFVSVQSADYFAQGAIDILCQLGIQQLAFGTENVIDYQKLIKVYEKKSEQMTAYLSTLEDTFSYPQKTQKMWEIFAGVKFSGQTPNHILGLSYAKASAGKHIQLCPIKRQGAAYHSKDKNHLLASASAIRQHLNDWDFISHSVPNAGLLINNPHMSWDHYFSFLKYQILNHSDLTSIFQVNDELASRIKKAIKVSQNIDHLVDTVATKRYTKARVRRILTYILVNAKEPTLPKGIHILGFTSKGQAHLKKLKKSRPLITRIGAETWDEMTQKADSIYQLGHQDIPEQSFGRIPIIIKNERLN.

Residues 7 to 20, G96, N152, and R175 each bind ATP; that span reads IAEF…HKYL.

The protein belongs to the TmcAL family.

Its subcellular location is the cytoplasm. It carries out the reaction cytidine(34) in elongator tRNA(Met) + acetate + ATP = N(4)-acetylcytidine(34) in elongator tRNA(Met) + AMP + diphosphate. Its function is as follows. Catalyzes the formation of N(4)-acetylcytidine (ac(4)C) at the wobble position of elongator tRNA(Met), using acetate and ATP as substrates. First activates an acetate ion to form acetyladenylate (Ac-AMP) and then transfers the acetyl group to tRNA to form ac(4)C34. In Streptococcus pyogenes serotype M1, this protein is tRNA(Met) cytidine acetate ligase.